Here is an 85-residue protein sequence, read N- to C-terminus: U4-theraphotoxin-Hhn1d (85 aa).

The signal sequence occupies residues 1 to 22 (MKVTLIAILTCAAVLVLHTTAA). A propeptide spanning residues 23–48 (EELEAESQLMEVGMPDTELAAVDEER) is cleaved from the precursor. 3 disulfides stabilise this stretch: C52–C66, C56–C77, and C71–C82.

Belongs to the neurotoxin 12 (Hwtx-2) family. 02 (Hwtx-2) subfamily. As to expression, expressed by the venom gland.

Its subcellular location is the secreted. Its function is as follows. Postsynaptic neurotoxin. The chain is U4-theraphotoxin-Hhn1d from Cyriopagopus hainanus (Chinese bird spider).